Reading from the N-terminus, the 593-residue chain is Probable serine/threonine-protein kinase samkB (593 aa).

In terms of domain architecture, SAM spans 29–93; the sequence is WNNEAVCEWL…SIFKKLKNNN (65 aa). A disordered region spans residues 108-157; it reads ESNSINNSNNNNNNNNNNNNNNNNNNNNNNNNNNNNNNNNNNNNNNKIDT. Positions 113 to 153 are enriched in low complexity; it reads NNSNNNNNNNNNNNNNNNNNNNNNNNNNNNNNNNNNNNNNN. The Protein kinase domain maps to 186–438; the sequence is YKLIEEIGRG…SKQLLEAQWF (253 aa). ATP-binding positions include 192 to 200 and lysine 216; that span reads IGRGAFSIV. Catalysis depends on aspartate 313, which acts as the Proton acceptor.

This sequence belongs to the protein kinase superfamily. Ser/Thr protein kinase family.

The enzyme catalyses L-seryl-[protein] + ATP = O-phospho-L-seryl-[protein] + ADP + H(+). The catalysed reaction is L-threonyl-[protein] + ATP = O-phospho-L-threonyl-[protein] + ADP + H(+). This Dictyostelium discoideum (Social amoeba) protein is Probable serine/threonine-protein kinase samkB (samkB).